The chain runs to 357 residues: 3-dehydroquinate synthase (357 aa).

NAD(+)-binding positions include 126–127 (TT), Lys-139, and Lys-148. Zn(2+)-binding residues include Glu-181, His-244, and His-261.

The protein belongs to the sugar phosphate cyclases superfamily. Dehydroquinate synthase family. Requires Co(2+) as cofactor. Zn(2+) is required as a cofactor. The cofactor is NAD(+).

The protein resides in the cytoplasm. It catalyses the reaction 7-phospho-2-dehydro-3-deoxy-D-arabino-heptonate = 3-dehydroquinate + phosphate. It participates in metabolic intermediate biosynthesis; chorismate biosynthesis; chorismate from D-erythrose 4-phosphate and phosphoenolpyruvate: step 2/7. Its function is as follows. Catalyzes the conversion of 3-deoxy-D-arabino-heptulosonate 7-phosphate (DAHP) to dehydroquinate (DHQ). The polypeptide is 3-dehydroquinate synthase (Solibacter usitatus (strain Ellin6076)).